We begin with the raw amino-acid sequence, 543 residues long: CTP synthase (543 aa).

Positions 1–265 are amidoligase domain; the sequence is MTRYIFVTGG…DDFVVERFGL (265 aa). Residue S13 participates in CTP binding. Residue S13 coordinates UTP. ATP is bound by residues 14 to 19 and D71; that span reads SLGKGI. Mg(2+) contacts are provided by D71 and E139. CTP is bound by residues 146 to 148, 186 to 191, and K222; these read DIE and KTKPTQ. UTP contacts are provided by residues 186-191 and K222; that span reads KTKPTQ. A Glutamine amidotransferase type-1 domain is found at 290–541; sequence TIAMVGKYME…VKAALAQHQK (252 aa). Position 351 (G351) interacts with L-glutamine. The active-site Nucleophile; for glutamine hydrolysis is C378. L-glutamine-binding positions include 379–382, E402, and R469; that span reads LGMQ. Active-site residues include H514 and E516.

Belongs to the CTP synthase family. As to quaternary structure, homotetramer.

The catalysed reaction is UTP + L-glutamine + ATP + H2O = CTP + L-glutamate + ADP + phosphate + 2 H(+). It catalyses the reaction L-glutamine + H2O = L-glutamate + NH4(+). It carries out the reaction UTP + NH4(+) + ATP = CTP + ADP + phosphate + 2 H(+). It functions in the pathway pyrimidine metabolism; CTP biosynthesis via de novo pathway; CTP from UDP: step 2/2. Allosterically activated by GTP, when glutamine is the substrate; GTP has no effect on the reaction when ammonia is the substrate. The allosteric effector GTP functions by stabilizing the protein conformation that binds the tetrahedral intermediate(s) formed during glutamine hydrolysis. Inhibited by the product CTP, via allosteric rather than competitive inhibition. Its function is as follows. Catalyzes the ATP-dependent amination of UTP to CTP with either L-glutamine or ammonia as the source of nitrogen. Regulates intracellular CTP levels through interactions with the four ribonucleotide triphosphates. The sequence is that of CTP synthase from Pseudomonas syringae pv. tomato (strain ATCC BAA-871 / DC3000).